A 249-amino-acid chain; its full sequence is Small ribosomal subunit protein uS3 (249 aa).

The 71-residue stretch at 39 to 109 (IRTYVLARLK…EVKIDVVEVV (71 aa)) folds into the KH type-2 domain. Basic and acidic residues predominate over residues 226-239 (KERRNDAGARNRDS). The interval 226 to 249 (KERRNDAGARNRDSRTKRRHRTKR) is disordered. The segment covering 240-249 (RTKRRHRTKR) has biased composition (basic residues).

Belongs to the universal ribosomal protein uS3 family. In terms of assembly, part of the 30S ribosomal subunit. Forms a tight complex with proteins S10 and S14.

Functionally, binds the lower part of the 30S subunit head. Binds mRNA in the 70S ribosome, positioning it for translation. This Pelodictyon phaeoclathratiforme (strain DSM 5477 / BU-1) protein is Small ribosomal subunit protein uS3.